Reading from the N-terminus, the 768-residue chain is MIKEVVKRDGTVVPFEKNKITMAIYKAMLSVKNGTMKDAEQLADKVVARLKDKERPSVEEIQDVVEDVLMTSKIDGKTFTDVAKSYILYREKRRAIREEKELMGVKDDLKLTLNAVKVLEARYLLKDEDGKIIETPRQMFRRVASHIGIVEALYDYIKYKKTGKVPENAEIIGKVSPTQEEVLRRAFGYMKEDGIIEGTFEEFMDFIQTKGTSAGHYINRFEEVMSSLDFVPNSPTLMNAGTKLGQLSACFVLPVGDSIEDIFETLKNTALIHKSGGGTGFSFSRLRPKDDIVGSTKGVASGPVSFMKIFDVTTDVIKQGGKRRGANMGILNYNHPDIMEFILSKDSENKVLSNFNISVGVTDDFFDKLDNDDYVDLVNPRTKKIMKRIKAREIWDAIIDQAWKTADPGLIFLDEINRKNPVKNVGDIESTNPCGEQPLLPYESCNLGSINLSKYVVDGKKIDFDRLRETVWTATRFLDDVIDANKFPVEQIKKVTRMTRKIGLGVMGFADMLIKLEIPYNSWEALEIGEKVMSFINDESHKASQALAEERGVFPAWYGSEWEKEGIKMRNSTTTTIAPTGTISIIAGCSSSIEPIFALAFVRHVLNGQELLEVNPLFEEKTRELGIYSEELMRQVAETGNLENVKINEEVKKIFVTAHEIDPQWHVLMQATFQRYCDSGVSKTINMRSDATREDIARAYRMAKDLHCKGITVYRDKSKTVQVLTAGTAETKKPEEKEVIELVTKMPDKYLKIDSTFDPACPTGKCDK.

The ATP-cone domain maps to 3–97; it reads KEVVKRDGTV…LYREKRRAIR (95 aa). Substrate contacts are provided by residues serine 234, 249–250, glycine 278, 432–436, and 579–583; these read AC, NPCGE, and PTGTI. Cysteines 250 and 445 form a disulfide. Asparagine 432 functions as the Proton acceptor in the catalytic mechanism. Cysteine 434 functions as the Cysteine radical intermediate in the catalytic mechanism. Glutamate 436 acts as the Proton acceptor in catalysis.

This sequence belongs to the ribonucleoside diphosphate reductase class-2 family. In terms of assembly, monomer. Adenosylcob(III)alamin is required as a cofactor.

It catalyses the reaction a 2'-deoxyribonucleoside 5'-diphosphate + [thioredoxin]-disulfide + H2O = a ribonucleoside 5'-diphosphate + [thioredoxin]-dithiol. Its function is as follows. Provides the precursors necessary for DNA synthesis. Catalyzes the biosynthesis of deoxyribonucleotides from the corresponding ribonucleotides. This chain is Vitamin B12-dependent ribonucleoside-diphosphate reductase, found in Thermoplasma acidophilum (strain ATCC 25905 / DSM 1728 / JCM 9062 / NBRC 15155 / AMRC-C165).